The primary structure comprises 257 residues: Glucosamine-6-phosphate deaminase (257 aa).

Asp64 serves as the catalytic Proton acceptor; for enolization step. Catalysis depends on Asn133, which acts as the For ring-opening step. Residue His135 is the Proton acceptor; for ring-opening step of the active site. The active-site For ring-opening step is the Glu140.

The protein belongs to the glucosamine/galactosamine-6-phosphate isomerase family. NagB subfamily.

The enzyme catalyses alpha-D-glucosamine 6-phosphate + H2O = beta-D-fructose 6-phosphate + NH4(+). It participates in amino-sugar metabolism; N-acetylneuraminate degradation; D-fructose 6-phosphate from N-acetylneuraminate: step 5/5. Catalyzes the reversible isomerization-deamination of glucosamine 6-phosphate (GlcN6P) to form fructose 6-phosphate (Fru6P) and ammonium ion. The chain is Glucosamine-6-phosphate deaminase from Corynebacterium urealyticum (strain ATCC 43042 / DSM 7109).